We begin with the raw amino-acid sequence, 232 residues long: Ribonuclease 3 (232 aa).

One can recognise an RNase III domain in the interval 5–134 (QTVLKNHFAI…FLGALLLDKD (130 aa)). Glu-47 lines the Mg(2+) pocket. Asp-51 is an active-site residue. 2 residues coordinate Mg(2+): Asp-120 and Glu-123. Residue Glu-123 is part of the active site. A DRBM domain is found at 160-229 (DYKTHLQELL…AKNAVEKGLD (70 aa)).

Belongs to the ribonuclease III family. Homodimer. The cofactor is Mg(2+).

It localises to the cytoplasm. The catalysed reaction is Endonucleolytic cleavage to 5'-phosphomonoester.. Digests double-stranded RNA. Involved in the processing of primary rRNA transcript to yield the immediate precursors to the large and small rRNAs (23S and 16S). Processes some mRNAs, and tRNAs when they are encoded in the rRNA operon. Processes pre-crRNA and tracrRNA of type II CRISPR loci if present in the organism. The chain is Ribonuclease 3 from Streptococcus pneumoniae (strain P1031).